We begin with the raw amino-acid sequence, 265 residues long: Mlc titration factor A (265 aa).

H111, H148, H152, and E211 together coordinate Zn(2+).

Belongs to the MtfA family. In terms of assembly, interacts with Mlc. Requires Zn(2+) as cofactor.

The protein localises to the cytoplasm. Its function is as follows. Involved in the modulation of the activity of the glucose-phosphotransferase system (glucose-PTS). Interacts with the transcriptional repressor Mlc, preventing its interaction with DNA and leading to the modulation of expression of genes regulated by Mlc, including ptsG, which encodes the PTS system glucose-specific EIICB component. In terms of biological role, shows zinc-dependent metallopeptidase activity. The chain is Mlc titration factor A from Salmonella choleraesuis (strain SC-B67).